A 90-amino-acid polypeptide reads, in one-letter code: Large ribosomal subunit protein eL37 (90 aa).

Cys-19, Cys-22, Cys-34, and Cys-37 together coordinate Zn(2+). The C4-type zinc-finger motif lies at Cys-19–Cys-37. Positions Arg-21 to Lys-31 are enriched in basic residues. The segment at Arg-21–Gly-59 is disordered.

It belongs to the eukaryotic ribosomal protein eL37 family. The cofactor is Zn(2+).

Its function is as follows. Binds to the 23S rRNA. The chain is Large ribosomal subunit protein eL37 (RPL37) from Encephalitozoon cuniculi (strain GB-M1) (Microsporidian parasite).